The sequence spans 779 residues: Tricorn protease-interacting factor F3 (779 aa).

Residues E102 and 231-235 (GAMEN) each bind substrate. Zn(2+) is bound at residue H266. The active-site Proton acceptor is E267. Zn(2+) contacts are provided by H270 and E289.

Belongs to the peptidase M1 family. Part of the tricorn proteolytic complex. The cofactor is Zn(2+).

It is found in the cytoplasm. Functionally, proteases F1, F2 and F3 degrade oligopeptides produced by Tricorn (themselves probably produced by the proteasome), yielding free amino acids. The protein is Tricorn protease-interacting factor F3 (trf3) of Thermoplasma volcanium (strain ATCC 51530 / DSM 4299 / JCM 9571 / NBRC 15438 / GSS1).